A 47-amino-acid chain; its full sequence is Glyceraldehyde-3-phosphate dehydrogenase, cytosolic (47 aa).

This sequence belongs to the glyceraldehyde-3-phosphate dehydrogenase family. As to quaternary structure, homotetramer.

The protein resides in the cytoplasm. It catalyses the reaction D-glyceraldehyde 3-phosphate + phosphate + NAD(+) = (2R)-3-phospho-glyceroyl phosphate + NADH + H(+). It participates in carbohydrate degradation; glycolysis; pyruvate from D-glyceraldehyde 3-phosphate: step 1/5. The sequence is that of Glyceraldehyde-3-phosphate dehydrogenase, cytosolic from Pseudotsuga menziesii (Douglas-fir).